The following is a 494-amino-acid chain: UPF0371 protein SPy_1343/M5005_Spy1095 (494 aa).

Belongs to the UPF0371 family.

In Streptococcus pyogenes serotype M1, this protein is UPF0371 protein SPy_1343/M5005_Spy1095.